A 726-amino-acid polypeptide reads, in one-letter code: A-type inclusion protein A25 homolog (726 aa).

The tract at residues 342-361 is disordered; it reads TNTGIEEPHATGGDKEDQPI. A compositionally biased stretch (basic and acidic residues) spans 347 to 360; that stretch reads EEPHATGGDKEDQP. A run of 4 repeats spans residues 612–634, 639–661, 667–689, and 691–713. Residues 612-713 are 4 X approximate tandem repeats; sequence RELEEERRRV…ERQLNDCRRN (102 aa).

The protein belongs to the poxviridae A25 protein family. Interacts (via N-terminus) with protein A26.

The protein localises to the virion. Its function is as follows. Structural protein that forms a matrix surrounding the mature virion (MV) through interaction with protein A26. Presence of protein A25 in the virion structurally prevents direct virus-cell fusion mechanism. In Camelus, this protein is A-type inclusion protein A25 homolog.